Reading from the N-terminus, the 166-residue chain is Deoxyuridine 5'-triphosphate nucleotidohydrolase (166 aa).

The tract at residues 1–24 (MACVNEPSPKLQKLDRNGIHGDSS) is disordered. Glutamate 138 is a binding site for Mg(2+).

This sequence belongs to the dUTPase family. Homotrimer. Mg(2+) serves as cofactor.

The catalysed reaction is dUTP + H2O = dUMP + diphosphate + H(+). Its pathway is pyrimidine metabolism; dUMP biosynthesis; dUMP from dCTP (dUTP route): step 2/2. In terms of biological role, this enzyme is involved in nucleotide metabolism: it produces dUMP, the immediate precursor of thymidine nucleotides and it decreases the intracellular concentration of dUTP, preventing uracil incorporation into DNA. This Arabidopsis thaliana (Mouse-ear cress) protein is Deoxyuridine 5'-triphosphate nucleotidohydrolase (DUT).